Consider the following 318-residue polypeptide: Acetyl-coenzyme A carboxylase carboxyl transferase subunit alpha (318 aa).

One can recognise a CoA carboxyltransferase C-terminal domain in the interval 39–292 (LTDKSEKQLR…GDSIAAELPD (254 aa)).

Belongs to the AccA family. Acetyl-CoA carboxylase is a heterohexamer composed of biotin carboxyl carrier protein (AccB), biotin carboxylase (AccC) and two subunits each of ACCase subunit alpha (AccA) and ACCase subunit beta (AccD).

Its subcellular location is the cytoplasm. The enzyme catalyses N(6)-carboxybiotinyl-L-lysyl-[protein] + acetyl-CoA = N(6)-biotinyl-L-lysyl-[protein] + malonyl-CoA. The protein operates within lipid metabolism; malonyl-CoA biosynthesis; malonyl-CoA from acetyl-CoA: step 1/1. Component of the acetyl coenzyme A carboxylase (ACC) complex. First, biotin carboxylase catalyzes the carboxylation of biotin on its carrier protein (BCCP) and then the CO(2) group is transferred by the carboxyltransferase to acetyl-CoA to form malonyl-CoA. The sequence is that of Acetyl-coenzyme A carboxylase carboxyl transferase subunit alpha from Gluconacetobacter diazotrophicus (strain ATCC 49037 / DSM 5601 / CCUG 37298 / CIP 103539 / LMG 7603 / PAl5).